The primary structure comprises 251 residues: Pyrroloquinoline-quinone synthase (251 aa).

This sequence belongs to the PqqC family.

The enzyme catalyses 6-(2-amino-2-carboxyethyl)-7,8-dioxo-1,2,3,4,7,8-hexahydroquinoline-2,4-dicarboxylate + 3 O2 = pyrroloquinoline quinone + 2 H2O2 + 2 H2O + H(+). It participates in cofactor biosynthesis; pyrroloquinoline quinone biosynthesis. Its function is as follows. Ring cyclization and eight-electron oxidation of 3a-(2-amino-2-carboxyethyl)-4,5-dioxo-4,5,6,7,8,9-hexahydroquinoline-7,9-dicarboxylic-acid to PQQ. The polypeptide is Pyrroloquinoline-quinone synthase (Pseudomonas putida (strain ATCC 700007 / DSM 6899 / JCM 31910 / BCRC 17059 / LMG 24140 / F1)).